A 242-amino-acid chain; its full sequence is Lactate utilization protein A 2 (242 aa).

This sequence belongs to the LutA/YkgE family.

In terms of biological role, is involved in L-lactate degradation and allows cells to grow with lactate as the sole carbon source. This Bacillus cereus (strain 03BB102) protein is Lactate utilization protein A 2.